A 564-amino-acid chain; its full sequence is Dihydroxy-acid dehydratase (564 aa).

Residue aspartate 80 coordinates Mg(2+). Cysteine 121 is a binding site for [2Fe-2S] cluster. 2 residues coordinate Mg(2+): aspartate 122 and lysine 123. Lysine 123 bears the N6-carboxylysine mark. Cysteine 194 provides a ligand contact to [2Fe-2S] cluster. Glutamate 447 serves as a coordination point for Mg(2+). The Proton acceptor role is filled by serine 473.

It belongs to the IlvD/Edd family. In terms of assembly, homodimer. The cofactor is [2Fe-2S] cluster. Requires Mg(2+) as cofactor.

It catalyses the reaction (2R)-2,3-dihydroxy-3-methylbutanoate = 3-methyl-2-oxobutanoate + H2O. The catalysed reaction is (2R,3R)-2,3-dihydroxy-3-methylpentanoate = (S)-3-methyl-2-oxopentanoate + H2O. Its pathway is amino-acid biosynthesis; L-isoleucine biosynthesis; L-isoleucine from 2-oxobutanoate: step 3/4. The protein operates within amino-acid biosynthesis; L-valine biosynthesis; L-valine from pyruvate: step 3/4. Its function is as follows. Functions in the biosynthesis of branched-chain amino acids. Catalyzes the dehydration of (2R,3R)-2,3-dihydroxy-3-methylpentanoate (2,3-dihydroxy-3-methylvalerate) into 2-oxo-3-methylpentanoate (2-oxo-3-methylvalerate) and of (2R)-2,3-dihydroxy-3-methylbutanoate (2,3-dihydroxyisovalerate) into 2-oxo-3-methylbutanoate (2-oxoisovalerate), the penultimate precursor to L-isoleucine and L-valine, respectively. In Listeria monocytogenes serotype 4b (strain CLIP80459), this protein is Dihydroxy-acid dehydratase.